A 183-amino-acid chain; its full sequence is Glutathione-regulated potassium-efflux system ancillary protein KefG (183 aa).

It belongs to the NAD(P)H dehydrogenase (quinone) family. KefG subfamily. Interacts with KefB.

It is found in the cell inner membrane. It catalyses the reaction a quinone + NADH + H(+) = a quinol + NAD(+). The enzyme catalyses a quinone + NADPH + H(+) = a quinol + NADP(+). In terms of biological role, regulatory subunit of a potassium efflux system that confers protection against electrophiles. Required for full activity of KefB. The polypeptide is Glutathione-regulated potassium-efflux system ancillary protein KefG (Shigella flexneri serotype 5b (strain 8401)).